A 385-amino-acid polypeptide reads, in one-letter code: MRESTLMEKVTRRTISSFIFFIVSSTILFLAGKSSAKISHNGDNNVTALFLFGDSFLDAGNNNYINTTTLDQANFPPYGQTFFGLPTGRFSDGRLISDFIAEYANLPLIPPFLEPGNSQKKLYGVNFASAGAGALVETFQGSVINLRTQLDHYKKVERLWRTNFGKEESKKRISRAVYLISIGSNDYSSIFLTNQSLPISMSQHVDIVIGNLTTFIHEIYKIGGRKFGFLNVPDLGCFPALRILQPKNDDSCLRDASRLASMHNRALTNLLFQMQRQVKGFKFSLFDMNKSLRLRMQHPSKFGFKEGEEACCGTGKWRGVFSCGGKRIVKEYQLCENPKDYIFWDSLHLTQNTYNQFANLIWNGGHMSDSLVVGPYNINNLFQIP.

A signal peptide spans 1 to 35; that stretch reads MRESTLMEKVTRRTISSFIFFIVSSTILFLAGKSS. Residue Asn45 is glycosylated (N-linked (GlcNAc...) asparagine). Ser55 (nucleophile) is an active-site residue. Residues Asn66, Asn194, Asn211, and Asn289 are each glycosylated (N-linked (GlcNAc...) asparagine). Catalysis depends on residues Asp345 and His348.

The protein belongs to the 'GDSL' lipolytic enzyme family.

Its subcellular location is the secreted. This is GDSL esterase/lipase 5 (GLIP5) from Arabidopsis thaliana (Mouse-ear cress).